The primary structure comprises 339 residues: Heat-inducible transcription repressor HrcA (339 aa).

It belongs to the HrcA family.

Its function is as follows. Negative regulator of class I heat shock genes (grpE-dnaK-dnaJ and groELS operons). Prevents heat-shock induction of these operons. The sequence is that of Heat-inducible transcription repressor HrcA from Clostridioides difficile (strain 630) (Peptoclostridium difficile).